The chain runs to 337 residues: Outer membrane protein assembly factor BamC (337 aa).

An N-terminal signal peptide occupies residues 1-16 (MKKWLFPFAFVATLAG). Cysteine 17 is lipidated: N-palmitoyl cysteine. A lipid anchor (S-diacylglycerol cysteine) is attached at cysteine 17.

It belongs to the BamC family. As to quaternary structure, part of the Bam complex.

It localises to the cell outer membrane. Functionally, part of the outer membrane protein assembly complex, which is involved in assembly and insertion of beta-barrel proteins into the outer membrane. The sequence is that of Outer membrane protein assembly factor BamC from Pasteurella multocida (strain Pm70).